The chain runs to 155 residues: MADLTELMKNEVFMAFASYATIVLSKMMFMSTATAFYRLTRKVFANPEDCSSFGKGENAKKYLRTDERVERVRRAHLNDLENIVPFLGIGLLYSLSGPDLSTAILHFRLFVGARIYHTIAYLTPLPQPNRGLAFFLGYGVTLSMAYRLLKSRLYL.

Over 3–9 (DLTELMK) the chain is Lumenal. The helical transmembrane segment at 10–33 (NEVFMAFASYATIVLSKMMFMSTA) threads the bilayer. The Cytoplasmic segment spans residues 34-62 (TAFYRLTRKVFANPEDCSSFGKGENAKKY). Arg-38 lines the glutathione pocket. An N6-acetyllysine mark is found at Lys-42, Lys-55, and Lys-60. The chain crosses the membrane as a helical span at residues 63–96 (LRTDERVERVRRAHLNDLENIVPFLGIGLLYSLS). Arg-73, Arg-74, His-76, and Glu-81 together coordinate glutathione. The Lumenal portion of the chain corresponds to 97–99 (GPD). The chain crosses the membrane as a helical span at residues 100–123 (LSTAILHFRLFVGARIYHTIAYLT). Tyr-121 is a binding site for glutathione. Residues 124–128 (PLPQP) are Cytoplasmic-facing. Residues 129 to 148 (NRGLAFFLGYGVTLSMAYRL) form a helical membrane-spanning segment. Residues 149–155 (LKSRLYL) lie on the Lumenal side of the membrane.

The protein belongs to the MAPEG family. In terms of assembly, homotrimer; The trimer binds only one molecule of glutathione.

The protein resides in the endoplasmic reticulum membrane. It is found in the mitochondrion outer membrane. It catalyses the reaction RX + glutathione = an S-substituted glutathione + a halide anion + H(+). Its function is as follows. Conjugation of reduced glutathione to a wide number of exogenous and endogenous hydrophobic electrophiles. This chain is Microsomal glutathione S-transferase 1 (MGST1), found in Sus scrofa (Pig).